Reading from the N-terminus, the 415-residue chain is Transfer protein TraSA (415 aa).

In terms of domain architecture, FtsK spans aspartate 127–asparagine 326. Position 145 to 152 (glycine 145 to serine 152) interacts with ATP.

The polypeptide is Transfer protein TraSA (traSA) (Streptomyces ambofaciens).